A 330-amino-acid polypeptide reads, in one-letter code: Autoinducer 2 import system permease protein LsrD (330 aa).

Over 1 to 4 the chain is Cytoplasmic; the sequence is MRIR. A helical membrane pass occupies residues 5-25; it reads YGWELALAALLVIEIVSFGAI. The Periplasmic segment spans residues 26–42; that stretch reads NPRMLDLNMLLFSTSDF. A helical transmembrane segment spans residues 43–63; sequence ICIGIVALPLTMVIVSGGIDI. Over 64-67 the chain is Cytoplasmic; it reads SFGS. Transmembrane regions (helical) follow at residues 68–88 and 89–109; these read TIGL…PMPL and AILL…GLII. At 110–115 the chain is on the cytoplasmic side; sequence YTKVNP. A helical membrane pass occupies residues 116–136; that stretch reads LVITLGTLYLFAGSALLLSGM. The Periplasmic portion of the chain corresponds to 137 to 159; it reads AGATGYEGIGGFPMAFTDFANLD. The helical transmembrane segment at 160–180 threads the bilayer; it reads VLGLPVPLIIFLICLLVFWLW. Over 181–209 the chain is Cytoplasmic; it reads LHKTHAGRNVFLIGQSPRVALYSAIPVNR. A helical transmembrane segment spans residues 210–230; that stretch reads TLCALYAMTGLASAVAAVLLV. The Periplasmic portion of the chain corresponds to 231 to 237; it reads SYFGSAR. Helical transmembrane passes span 238 to 258 and 259 to 279; these read SDLG…GGAN and IYGG…VGYL. The Periplasmic segment spans residues 280–285; sequence QQGLQM. Residues 286–306 traverse the membrane as a helical segment; that stretch reads AGVPNQVSSALSGALLIVVVV. Topologically, residues 307-330 are cytoplasmic; the sequence is GRSVSLHRQQIKEWLARRANNPLP.

This sequence belongs to the binding-protein-dependent transport system permease family. AraH/RbsC subfamily. In terms of assembly, the complex is composed of two ATP-binding proteins (LsrA), two transmembrane proteins (LsrC and LsrD) and a solute-binding protein (LsrB).

The protein localises to the cell inner membrane. Functionally, part of the ABC transporter complex LsrABCD involved in autoinducer 2 (AI-2) import. Probably responsible for the translocation of the substrate across the membrane. This Escherichia coli O157:H7 protein is Autoinducer 2 import system permease protein LsrD (lsrD).